The following is a 360-amino-acid chain: DNA replication and repair protein RecF (360 aa).

Glycine 30 to threonine 37 contributes to the ATP binding site.

This sequence belongs to the RecF family.

The protein localises to the cytoplasm. Functionally, the RecF protein is involved in DNA metabolism; it is required for DNA replication and normal SOS inducibility. RecF binds preferentially to single-stranded, linear DNA. It also seems to bind ATP. The polypeptide is DNA replication and repair protein RecF (Shewanella denitrificans (strain OS217 / ATCC BAA-1090 / DSM 15013)).